Consider the following 224-residue polypeptide: UPF0758 protein Sde_3678 (224 aa).

The MPN domain maps to 102–224 (SLTSTTAVKQ…AVSFAERGWI (123 aa)). 3 residues coordinate Zn(2+): H173, H175, and D186. Positions 173-186 (HNHPSGIAEPSEPD) match the JAMM motif motif.

This sequence belongs to the UPF0758 family.

The polypeptide is UPF0758 protein Sde_3678 (Saccharophagus degradans (strain 2-40 / ATCC 43961 / DSM 17024)).